Reading from the N-terminus, the 312-residue chain is Malate dehydrogenase (312 aa).

NAD(+)-binding positions include 7 to 13 (GAAGGIG) and D34. Substrate is bound by residues R81 and R87. NAD(+) contacts are provided by residues N94 and 117 to 119 (ITN). N119 and R153 together coordinate substrate. The active-site Proton acceptor is the H177. An NAD(+)-binding site is contributed by M227.

It belongs to the LDH/MDH superfamily. MDH type 1 family. In terms of assembly, homodimer.

The enzyme catalyses (S)-malate + NAD(+) = oxaloacetate + NADH + H(+). Functionally, catalyzes the reversible oxidation of malate to oxaloacetate. This Salmonella newport (strain SL254) protein is Malate dehydrogenase.